We begin with the raw amino-acid sequence, 178 residues long: Large ribosomal subunit protein uL6 (178 aa).

This sequence belongs to the universal ribosomal protein uL6 family. Part of the 50S ribosomal subunit.

Its function is as follows. This protein binds to the 23S rRNA, and is important in its secondary structure. It is located near the subunit interface in the base of the L7/L12 stalk, and near the tRNA binding site of the peptidyltransferase center. The sequence is that of Large ribosomal subunit protein uL6 from Streptococcus agalactiae serotype V (strain ATCC BAA-611 / 2603 V/R).